The primary structure comprises 256 residues: UPF0246 protein Bpet1601 (256 aa).

The protein belongs to the UPF0246 family.

This Bordetella petrii (strain ATCC BAA-461 / DSM 12804 / CCUG 43448) protein is UPF0246 protein Bpet1601.